The primary structure comprises 819 residues: Nuclear pore complex protein Nup93 (819 aa).

Residue T49 is modified to Phosphothreonine. S52, S66, S72, S75, S80, S430, and S767 each carry phosphoserine.

It belongs to the nucleoporin interacting component (NIC) family. Part of the nuclear pore complex (NPC). Component of the p62 complex, a complex composed of NUP62 and NUP54. Forms a complex with NUP35, NUP155, NUP205 and lamin B; the interaction with NUP35 is direct. Does not interact with TPR. Interacts with SMAD4 and IPO7; translocates SMAD4 to the nucleus through the NPC upon BMP7 stimulation resulting in activation of SMAD4 signaling.

Its subcellular location is the nucleus membrane. The protein localises to the nucleus. It localises to the nuclear pore complex. It is found in the nucleus envelope. In terms of biological role, plays a role in the nuclear pore complex (NPC) assembly and/or maintenance. May anchor nucleoporins, but not NUP153 and TPR, to the NPC. During renal development, regulates podocyte migration and proliferation through SMAD4 signaling. The polypeptide is Nuclear pore complex protein Nup93 (Nup93) (Rattus norvegicus (Rat)).